The sequence spans 236 residues: Phosphatidylserine decarboxylase proenzyme (236 aa).

The Schiff-base intermediate with substrate; via pyruvic acid role is filled by Ser194. Pyruvic acid (Ser); by autocatalysis is present on Ser194.

This sequence belongs to the phosphatidylserine decarboxylase family. PSD-A subfamily. As to quaternary structure, heterodimer of a large membrane-associated beta subunit and a small pyruvoyl-containing alpha subunit. Requires pyruvate as cofactor. Is synthesized initially as an inactive proenzyme. Formation of the active enzyme involves a self-maturation process in which the active site pyruvoyl group is generated from an internal serine residue via an autocatalytic post-translational modification. Two non-identical subunits are generated from the proenzyme in this reaction, and the pyruvate is formed at the N-terminus of the alpha chain, which is derived from the carboxyl end of the proenzyme. The post-translation cleavage follows an unusual pathway, termed non-hydrolytic serinolysis, in which the side chain hydroxyl group of the serine supplies its oxygen atom to form the C-terminus of the beta chain, while the remainder of the serine residue undergoes an oxidative deamination to produce ammonia and the pyruvoyl prosthetic group on the alpha chain.

Its subcellular location is the cell membrane. It carries out the reaction a 1,2-diacyl-sn-glycero-3-phospho-L-serine + H(+) = a 1,2-diacyl-sn-glycero-3-phosphoethanolamine + CO2. Its pathway is phospholipid metabolism; phosphatidylethanolamine biosynthesis; phosphatidylethanolamine from CDP-diacylglycerol: step 2/2. Functionally, catalyzes the formation of phosphatidylethanolamine (PtdEtn) from phosphatidylserine (PtdSer). This Rhodospirillum rubrum (strain ATCC 11170 / ATH 1.1.1 / DSM 467 / LMG 4362 / NCIMB 8255 / S1) protein is Phosphatidylserine decarboxylase proenzyme.